Consider the following 316-residue polypeptide: Lipoyl synthase (316 aa).

A compositionally biased stretch (basic and acidic residues) spans 1–15 (MKARNESMSKGEYKT). The disordered stretch occupies residues 1 to 33 (MKARNESMSKGEYKTKSLKNRPDPTQPKLKKPS). Cysteine 64, cysteine 69, cysteine 75, cysteine 90, cysteine 94, cysteine 97, and serine 304 together coordinate [4Fe-4S] cluster. The Radical SAM core domain maps to 76–293 (FGHGTATFMI…EQAGMEMGFT (218 aa)).

It belongs to the radical SAM superfamily. Lipoyl synthase family. The cofactor is [4Fe-4S] cluster.

It localises to the cytoplasm. It carries out the reaction [[Fe-S] cluster scaffold protein carrying a second [4Fe-4S](2+) cluster] + N(6)-octanoyl-L-lysyl-[protein] + 2 oxidized [2Fe-2S]-[ferredoxin] + 2 S-adenosyl-L-methionine + 4 H(+) = [[Fe-S] cluster scaffold protein] + N(6)-[(R)-dihydrolipoyl]-L-lysyl-[protein] + 4 Fe(3+) + 2 hydrogen sulfide + 2 5'-deoxyadenosine + 2 L-methionine + 2 reduced [2Fe-2S]-[ferredoxin]. Its pathway is protein modification; protein lipoylation via endogenous pathway; protein N(6)-(lipoyl)lysine from octanoyl-[acyl-carrier-protein]: step 2/2. Catalyzes the radical-mediated insertion of two sulfur atoms into the C-6 and C-8 positions of the octanoyl moiety bound to the lipoyl domains of lipoate-dependent enzymes, thereby converting the octanoylated domains into lipoylated derivatives. This Hydrogenovibrio crunogenus (strain DSM 25203 / XCL-2) (Thiomicrospira crunogena) protein is Lipoyl synthase.